A 72-amino-acid polypeptide reads, in one-letter code: uncharacterized protein (72 aa).

2 helical membrane passes run 15 to 35 and 50 to 70; these read WEIL…IGSI and ILIY…MYFI.

The protein resides in the host membrane. This is an uncharacterized protein from Spiroplasma melliferum (SpV1).